Reading from the N-terminus, the 157-residue chain is SsrA-binding protein (157 aa).

Residues 136-151 (KRETEKKRDWSREKGR) are compositionally biased toward basic and acidic residues. The tract at residues 136-157 (KRETEKKRDWSREKGRLLRARG) is disordered.

It belongs to the SmpB family.

It localises to the cytoplasm. Required for rescue of stalled ribosomes mediated by trans-translation. Binds to transfer-messenger RNA (tmRNA), required for stable association of tmRNA with ribosomes. tmRNA and SmpB together mimic tRNA shape, replacing the anticodon stem-loop with SmpB. tmRNA is encoded by the ssrA gene; the 2 termini fold to resemble tRNA(Ala) and it encodes a 'tag peptide', a short internal open reading frame. During trans-translation Ala-aminoacylated tmRNA acts like a tRNA, entering the A-site of stalled ribosomes, displacing the stalled mRNA. The ribosome then switches to translate the ORF on the tmRNA; the nascent peptide is terminated with the 'tag peptide' encoded by the tmRNA and targeted for degradation. The ribosome is freed to recommence translation, which seems to be the essential function of trans-translation. The chain is SsrA-binding protein from Rhodopseudomonas palustris (strain HaA2).